A 68-amino-acid polypeptide reads, in one-letter code: Small ribosomal subunit protein bS21 (68 aa).

The segment at Tyr36–Arg68 is disordered. Positions Glu37–Ala49 are enriched in basic and acidic residues. Basic residues predominate over residues Ala50–Arg59.

This sequence belongs to the bacterial ribosomal protein bS21 family.

This is Small ribosomal subunit protein bS21 from Zymomonas mobilis subsp. mobilis (strain ATCC 31821 / ZM4 / CP4).